A 154-amino-acid chain; its full sequence is TSET complex member tstD (154 aa).

The protein belongs to the adaptor complexes small subunit family. As to quaternary structure, component of the TSET complex, a heterohexamer composed of tstA, tstB, tstC, tstD, tstE and tstF, which may act in plasma membrane turnover. tstA, tstB, tstC and tstD are likely to be the core complex members with tstE and tstF acting as associated scaffold proteins.

The protein resides in the cell membrane. The protein localises to the cytoplasm. This is TSET complex member tstD from Dictyostelium discoideum (Social amoeba).